A 178-amino-acid polypeptide reads, in one-letter code: Large ribosomal subunit protein uL6 (178 aa).

Belongs to the universal ribosomal protein uL6 family. Part of the 50S ribosomal subunit.

Its function is as follows. This protein binds to the 23S rRNA, and is important in its secondary structure. It is located near the subunit interface in the base of the L7/L12 stalk, and near the tRNA binding site of the peptidyltransferase center. The polypeptide is Large ribosomal subunit protein uL6 (Streptococcus pneumoniae (strain 70585)).